Consider the following 188-residue polypeptide: HGPRTase-like protein (188 aa).

It belongs to the purine/pyrimidine phosphoribosyltransferase family. Archaeal HPRT subfamily.

May catalyze a purine salvage reaction, the substrate is unknown. The chain is HGPRTase-like protein from Halobacterium salinarum (strain ATCC 29341 / DSM 671 / R1).